Reading from the N-terminus, the 107-residue chain is Putative double-stranded DNA mimic protein ETA_15890 (107 aa).

The protein belongs to the putative dsDNA mimic protein family.

Functionally, may act as a double-stranded DNA (dsDNA) mimic. Probably regulates the activity of a dsDNA-binding protein. The chain is Putative double-stranded DNA mimic protein ETA_15890 from Erwinia tasmaniensis (strain DSM 17950 / CFBP 7177 / CIP 109463 / NCPPB 4357 / Et1/99).